Consider the following 557-residue polypeptide: MSGASEVPSFRWTQSLRRGLSHFTTSAKGDVLRDAKSLVDGLDFNQVSQVQRVMRKDKRSDDDLSKLRDLNRSVDSLMVMKNKQNNVSLKIGSLSKDELMDLATDLEKLKRKINLGDRQGPGVYQGNLTSAQLEKRSEILKSLGFQPRANQNGVVKVWDIKNPKLLINQFGSIPALTIACMSVQGAEQMNDVVQGLTSLGLLYTVKYPNLDDLDKLSKDHPCLEFITKEESANNISGYNLSLSAAVKAGACLVDGGNMLETILVKPDNFQDIVKSLLVVKRQEKMFVNEKPGLRNPYENILYKLCLSGEGWPYIGSRSQIVGRAWENTTVDLSKEVVYGPSAPVKNGGNMRLSPLSDTQEAVIKEAIGKLDMDETIWIDIEGPPNDPVELAIYQPSTGNYIHCFRVPHDEKGFKNGSKYSHGILLRDIENARSGLLSRILMRLPQKVVFTCQGSDDIQKLLQMNGRPDIATIDMSFSSEQARFFEGVVWEKFGHLCTRHNGVVLSRKKKGGNSGEPHCALLDCIIFQAAFEGQVTGQIPKPLLPNSLIFKDEPRVAM.

Positions 54 to 235 (MRKDKRSDDD…ITKEESANNI (182 aa)) are binding site for the cap structure m7GTP. 2 residues coordinate Mn(2+): aspartate 379 and glutamate 381. Zn(2+)-binding residues include glutamate 389, cysteine 496, histidine 499, and cysteine 518. Aspartate 522 is a binding site for Mn(2+).

Belongs to the arenaviridae nucleocapsid protein family. In terms of assembly, homomultimerizes to form the nucleocapsid. Binds to viral genomic RNA. Interacts with glycoprotein G2. Interacts with protein Z; this interaction probably directs the encapsidated genome to budding sites. Interacts with protein L; this interaction does not interfere with Z-L interaction. Interacts with host IKBKE (via Protein kinase domain); the interaction inhibits IKBKE kinase activity.

The protein resides in the virion. Its subcellular location is the host cytoplasm. Encapsidates the genome, protecting it from nucleases. The encapsidated genomic RNA is termed the nucleocapsid (NC). Serves as template for viral transcription and replication. The increased presence of protein N in host cell does not seem to trigger the switch from transcription to replication as observed in other negative strain RNA viruses. Through the interaction with host IKBKE, strongly inhibits the phosphorylation and nuclear translocation of host IRF3, a protein involved in interferon activation pathway, leading to the inhibition of interferon-beta and IRF3-dependent promoters activation. Also encodes a functional 3'-5' exoribonuclease that degrades preferentially dsRNA substrates and thereby participates in the suppression of interferon induction. The protein is Nucleoprotein of Calomys callosus (Large vesper mouse).